The sequence spans 1429 residues: Alpha-agarase (1429 aa).

Residues 1–26 (MFKTKRSLLNSSIAISFAVLGVQAQA) form the signal peptide. CBM6 domains follow at residues 29 to 161 (LELQ…FRLT) and 211 to 345 (FVIQ…LTFT). 2 disordered regions span residues 349–400 (SDGG…DGVS) and 474–495 (NTPAGTQVDASGCETDNGGEPG). Residues 369 to 378 (SSDSCPNTPT) show a composition bias toward polar residues. Residues 490-638 (NGGEPGDSYY…GGTNFVHPSN (149 aa)) form the PA14 domain. Residues 662–793 (IYIQLEDFDE…QWSGDLVRLA (132 aa)) form the CBM6 3 domain.

The protein belongs to the glycosyl hydrolase 96 family. In terms of assembly, homodimer. The cofactor is Ca(2+).

The enzyme catalyses Endohydrolysis of 1,3-alpha-L-galactosidic linkages in agarose, yielding agarotetraose as the major product.. In terms of biological role, alpha-agarase. Does not hydrolyze agarotetraose, agarohexaose, kappa-carrageenan, iota-carrageenan or lambda-carrageenan. In Alteromonas agarilytica, this protein is Alpha-agarase.